Reading from the N-terminus, the 213-residue chain is 3-demethoxyubiquinol 3-hydroxylase (213 aa).

Positions 62, 92, 95, 144, 176, and 179 each coordinate Fe cation.

It belongs to the COQ7 family. Requires Fe cation as cofactor.

The protein localises to the cell membrane. It catalyses the reaction a 5-methoxy-2-methyl-3-(all-trans-polyprenyl)benzene-1,4-diol + AH2 + O2 = a 3-demethylubiquinol + A + H2O. Its pathway is cofactor biosynthesis; ubiquinone biosynthesis. In terms of biological role, catalyzes the hydroxylation of 2-nonaprenyl-3-methyl-6-methoxy-1,4-benzoquinol during ubiquinone biosynthesis. This chain is 3-demethoxyubiquinol 3-hydroxylase, found in Legionella pneumophila subsp. pneumophila (strain Philadelphia 1 / ATCC 33152 / DSM 7513).